Consider the following 257-residue polypeptide: MLAKRIVPCLDVKEGKVVKGVQFRNHEIVGDIVPLAARYADEGADELVFYDITASAHDRVIDKSWVSRVAERIDIPFCVAGGIRTIEQAREKLAFGADKISINSPALTDPSLIERLQEEFGRQCIVIGIDSYYDHISDSYKVKQFTGDEAATKDTQWYTQDWVEEVQKRGCGEIVLNVMNQDGVRQGYDIEQLSMIRSLCDVPLIASGGAGTMAHFKDVFALAKVDAALAASVFHKGIIDIQALKRYLRDNQIAVRV.

Residues Asp-11 and Asp-130 contribute to the active site.

This sequence belongs to the HisA/HisF family. In terms of assembly, heterodimer of HisH and HisF.

Its subcellular location is the cytoplasm. It catalyses the reaction 5-[(5-phospho-1-deoxy-D-ribulos-1-ylimino)methylamino]-1-(5-phospho-beta-D-ribosyl)imidazole-4-carboxamide + L-glutamine = D-erythro-1-(imidazol-4-yl)glycerol 3-phosphate + 5-amino-1-(5-phospho-beta-D-ribosyl)imidazole-4-carboxamide + L-glutamate + H(+). It participates in amino-acid biosynthesis; L-histidine biosynthesis; L-histidine from 5-phospho-alpha-D-ribose 1-diphosphate: step 5/9. IGPS catalyzes the conversion of PRFAR and glutamine to IGP, AICAR and glutamate. The HisF subunit catalyzes the cyclization activity that produces IGP and AICAR from PRFAR using the ammonia provided by the HisH subunit. This Shewanella piezotolerans (strain WP3 / JCM 13877) protein is Imidazole glycerol phosphate synthase subunit HisF.